Consider the following 287-residue polypeptide: Ribosomal RNA small subunit methyltransferase A (287 aa).

Residues N28, L30, G55, E77, D103, and N123 each contribute to the S-adenosyl-L-methionine site.

The protein belongs to the class I-like SAM-binding methyltransferase superfamily. rRNA adenine N(6)-methyltransferase family. RsmA subfamily.

The protein resides in the cytoplasm. It carries out the reaction adenosine(1518)/adenosine(1519) in 16S rRNA + 4 S-adenosyl-L-methionine = N(6)-dimethyladenosine(1518)/N(6)-dimethyladenosine(1519) in 16S rRNA + 4 S-adenosyl-L-homocysteine + 4 H(+). Specifically dimethylates two adjacent adenosines (A1518 and A1519) in the loop of a conserved hairpin near the 3'-end of 16S rRNA in the 30S particle. May play a critical role in biogenesis of 30S subunits. The protein is Ribosomal RNA small subunit methyltransferase A of Rhodopseudomonas palustris (strain BisA53).